A 1065-amino-acid chain; its full sequence is MIFNASQDSKTEIEYQTISSTQTYLAEEQSERLHNLISKEQLEKLNQAFNERPDSQVGFDDLRGLLLEQDITFNDAVYNRLFLKINQNRDFMVDWNEFVSYLIFGFQEEDPSSQKESLILPISVAPSVRKTEHRSTVCCVALLKAKSDQVPIEEVTETVNFSFGGEDSPEASGMWVTASHEGMLRFWTSHMEPIRTATSESSKPHAVYCMSYAFYNNGKVHSKLVLGDYAGNVRILSYSPNLRGPFQAKPGAALIEVVWADVLKGKIPQMIPKEYINLHNEMISCVHYSLHMNALFATAEYRNTKKYRGRCPGMIMVTYDERSNFRVPLGVSTFFVAESHNIVVTGGPDTFVRIWDVYIPTEPSAILTGHNGGIVMVFVQPEENKVYSVDYQKIIKVWDLQEHTLLQTYGELVRLIHPSETDMTYFYHSHLRELIVAGRKLISIKCCPRVRVDLTDGNTHAAPVSVVLYNRLFRNIVTCGLDSYIIVWDPWSGRRKIIMKNCHTKMIYGEIIDIEITAATFDPLEQFLLTGARDGTLKIWNYNNAVVVRNMSIMPDQEVTSVIWVVDRILAMGWDRQVTEFNDVEGREYGDPKKWSKFHTDDITCADVKLGEGVVTATYSGEVIFWKLETGQPYRRYSVMDPTRFIELKLTPEEEKLMRRSKRLMSRLGSSRMSRATAITMPKADDGRDYGQNVPISVQAVLFLQTRPQTIQHGSVFISLDTGYIQVYSHHSRGGYMSQFLSVHKTGDCVLTMCTDRKNRYIYTGTAFGYIKVWHIVNYCVPEAEKVHVCMPRLRLEFIFMRKEFWVTRAKRVVRHQREPLLVSSYKAHLKAINSIAFINLPKIVFSGSHDYSCRLWTQGGRYLGTLGTVLPWSKLSPFERAGSENQVYRLPPDIKKVASSTTLKVISGVQMDRPAKRAEVKAPEDRDEETAQTDDGYDLKKIFDKPLKEPILGKHFTLPGKSVMDQRIDVDTTQSYIAVYTHLKVHHTEMLERLPTPAVISRVAGENYMDHYVPVEGKVDLSGSALNIKQPPRRNVRPNDPRNMRMAKTRGDMGPGPSPSQQSE.

WD repeat units lie at residues 153–197, 326–365, 369–408, 459–498, 511–550, 598–638, 745–784, and 828–867; these read EEVT…IRTA, RVPL…EPSA, GHNG…LLQT, THAA…RKII, IIDI…VVRN, FHTD…RRYS, KTGD…VPEA, and AHLK…LGTL. The segment covering 915-925 has biased composition (basic and acidic residues); sequence PAKRAEVKAPE. Disordered stretches follow at residues 915 to 936 and 1024 to 1065; these read PAKR…QTDD and GSAL…QQSE. Acidic residues predominate over residues 926 to 936; sequence DRDEETAQTDD.

The sequence is that of WD repeat-containing protein on Y chromosome from Drosophila persimilis (Fruit fly).